The sequence spans 189 residues: MAAGTTSDLRNGIVIRYNNDLYQVVEFQHVAPGNWRAFVRMKLKSLTTGKVIEDRVRAGAEIDIVRIERRPMQYLYREGDSFIFMDNDTFDQIPVSADLVGDAVRFMKENETVDLVYDAEKDTIIGVELPIFVNLKVVETTVAVRGDTATNVTKPATLETGAVIEVPAFINEGDVLKIDTRTGEYITRV.

Belongs to the elongation factor P family.

It localises to the cytoplasm. It participates in protein biosynthesis; polypeptide chain elongation. Involved in peptide bond synthesis. Stimulates efficient translation and peptide-bond synthesis on native or reconstituted 70S ribosomes in vitro. Probably functions indirectly by altering the affinity of the ribosome for aminoacyl-tRNA, thus increasing their reactivity as acceptors for peptidyl transferase. The protein is Elongation factor P of Chloroflexus aurantiacus (strain ATCC 29364 / DSM 637 / Y-400-fl).